The primary structure comprises 381 residues: uncharacterized protein (381 aa).

Disordered stretches follow at residues Met1–Thr20 and Ile36–Glu381. Residues Asn9 to Asp18 are compositionally biased toward acidic residues. 2 stretches are compositionally biased toward basic and acidic residues: residues Thr166–Glu175 and Ser186–Arg237. Phosphoserine is present on residues Ser339, Ser346, and Ser357. Residues Lys364–Lys374 are compositionally biased toward basic residues.

This is an uncharacterized protein from Arabidopsis thaliana (Mouse-ear cress).